A 228-amino-acid chain; its full sequence is CD9 antigen (228 aa).

Residues 2 to 12 (PVKGGTKCIKY) are Cytoplasmic-facing. The S-palmitoyl cysteine moiety is linked to residue Cys-9. A helical transmembrane segment spans residues 13–33 (LLFGFNFIFWLAGIAVLAIGL). Over 34–55 (WLRFDSQTKSIFEQETNNNNSS) the chain is Extracellular. 2 N-linked (GlcNAc...) asparagine glycosylation sites follow: Asn-52 and Asn-53. A helical membrane pass occupies residues 56-76 (FYTGVYILIGAGALMMLVGFL). Residues 77–87 (GCCGAVQESQC) lie on the Cytoplasmic side of the membrane. S-palmitoyl cysteine attachment occurs at residues Cys-78, Cys-79, and Cys-87. The helical transmembrane segment at 88–111 (MLGLFFGFLLVIFAIEIAAAIWGY) threads the bilayer. Residues 112–195 (SHKDEVIKEV…KEVFDNKFHI (84 aa)) lie on the Extracellular side of the membrane. Cystine bridges form between Cys-152-Cys-181 and Cys-153-Cys-167. A helical membrane pass occupies residues 196 to 221 (IGAVGIGIAVVMIFGMIFSMILCCAI). S-palmitoyl cysteine attachment occurs at residues Cys-218 and Cys-219. The Cytoplasmic portion of the chain corresponds to 222 to 228 (RRNREMV).

It belongs to the tetraspanin (TM4SF) family. Forms both disulfide-linked homodimers and higher homooligomers as well as heterooligomers with other members of the tetraspanin family. Interacts (via the second extracellular domain) with integrin ITGAV:ITGB3. Interacts with integrin ITGA6:ITGB1; interaction takes place in oocytes and is involved in sperm-egg fusion. Part of integrin-tetraspanin complexes composed of CD81, beta-1 and beta-2 integrins in the membrane of monocyte/macrophages. Interacts with CD63; identified in a complex with CD63 and ITGB3. Associates with CR2/CD21 and with PTGFRN/CD9P1. Part of a complex composed of CD9, CD81, PTGFRN and IGSF8. Interacts directly with IGSF8. Interacts with PDPN; this interaction is homophilic and attenuates platelet aggregation and pulmonary metastasis induced by PDPN. Interacts (on T cell side) with CD81 at immunological synapses between antigen-presenting cells and T cells. Post-translationally, palmitoylated at a low, basal level in unstimulated platelets. The level of palmitoylation increases when platelets are activated by thrombin (in vitro). The protein exists in three forms with molecular masses between 22 and 27 kDa, and is known to carry covalently linked fatty acids. Palmitoylation by ZDHHC2 regulates CD9 expression, association with other tetraspanin family proteins and function in cell adhesion. Detected in platelets (at protein level). Expressed by a variety of hematopoietic and epithelial cells.

Its subcellular location is the cell membrane. It localises to the membrane. The protein localises to the secreted. It is found in the extracellular exosome. Its function is as follows. Integral membrane protein associated with integrins, which regulates different processes, such as sperm-egg fusion, platelet activation and aggregation, and cell adhesion. Present at the cell surface of oocytes and plays a key role in sperm-egg fusion, possibly by organizing multiprotein complexes and the morphology of the membrane required for the fusion. In myoblasts, associates with CD81 and PTGFRN and inhibits myotube fusion during muscle regeneration. In macrophages, associates with CD81 and beta-1 and beta-2 integrins, and prevents macrophage fusion into multinucleated giant cells specialized in ingesting complement-opsonized large particles. Also prevents the fusion between mononuclear cell progenitors into osteoclasts in charge of bone resorption. Acts as a receptor for PSG17. Involved in platelet activation and aggregation. Regulates paranodal junction formation. Involved in cell adhesion, cell motility and tumor metastasis. The protein is CD9 antigen of Homo sapiens (Human).